The following is a 203-amino-acid chain: Urease accessory protein UreG (203 aa).

14-21 (GPVGAGKT) is a binding site for GTP.

It belongs to the SIMIBI class G3E GTPase family. UreG subfamily. As to quaternary structure, homodimer. UreD, UreF and UreG form a complex that acts as a GTP-hydrolysis-dependent molecular chaperone, activating the urease apoprotein by helping to assemble the nickel containing metallocenter of UreC. The UreE protein probably delivers the nickel.

It is found in the cytoplasm. Facilitates the functional incorporation of the urease nickel metallocenter. This process requires GTP hydrolysis, probably effectuated by UreG. This Jannaschia sp. (strain CCS1) protein is Urease accessory protein UreG.